The sequence spans 356 residues: uncharacterized protein (356 aa).

6 helical membrane passes run 2–22 (FEAIIYNISVMVAGIYLFHRL), 35–55 (EYVTVLMTFVSLLLAAYPIPF), 76–96 (NMIYTLTAAFIVSLVDVFIFG), 99–119 (IIYGITLIVIAGIVSAVGPFL), 124–144 (IISLLILNLISIIILLFLALL), and 151–171 (VEILVLIPISFIITIASAITF). The GGDEF domain occupies 218–353 (QSLALLLIDI…GRNKVMFNPI (136 aa)).

The protein resides in the cell membrane. This is an uncharacterized protein from Staphylococcus epidermidis (strain ATCC 35984 / DSM 28319 / BCRC 17069 / CCUG 31568 / BM 3577 / RP62A).